We begin with the raw amino-acid sequence, 418 residues long: Protease LasA (418 aa).

The N-terminal stretch at methionine 1–alanine 31 is a signal peptide. A propeptide spanning residues histidine 32–leucine 236 is cleaved from the precursor. The Zn(2+) site is built by histidine 259 and aspartate 272. An intrachain disulfide couples cysteine 301 to cysteine 347. Catalysis depends on proton donor/acceptor residues histidine 317 and histidine 356. Residue histidine 358 participates in Zn(2+) binding. An intrachain disulfide couples cysteine 391 to cysteine 406.

Belongs to the peptidase M23A family. It depends on Zn(2+) as a cofactor.

It localises to the secreted. Its function is as follows. Involved in proteolysis and elastolysis (degradation of the host protein elastin). Has staphylolytic activity (degrades pentaglycine cross-links in cell wall peptidoglycan), preferring Gly-Gly-|-X substrates where X is Ala or Gly. Enhances the elastolytic but not proteolytic activity of elastase (lasB) and elastolytic activity of other proteases. Degradation of elastin is likely to contribute to the pathogenicity of P.aeruginosa. This is Protease LasA (lasA) from Pseudomonas aeruginosa (strain UCBPP-PA14).